Here is a 643-residue protein sequence, read N- to C-terminus: E3 ubiquitin-protein ligase AMFR (643 aa).

6 consecutive transmembrane segments (helical) span residues 82–102 (LFVW…AKLI), 122–142 (FWNF…VQTV), 186–206 (VLSL…VCCV), 215–235 (TLAF…HVIL), 254–274 (GTYV…LDLM), and 276–296 (HIHM…VIFM). The RING-type zinc finger occupies 341–379 (CAICWDSMQAARKLPCGHLFHNSCLRSWLEQDTSCPTCR). Residues 429-449 (IASWLPSFSVEVMHTTNILGI) form a helical membrane-spanning segment. The 43-residue stretch at 456–498 (QLNAMAHQIQEMFPQVPYHLVLQDLQMTRSVEITTDNILEGRI) folds into the CUE domain. Residues 504–535 (TQRSDSLRPALNSPVERPSPDLEEGEASVQTE) form a disordered region. Residues Ser516 and Ser542 each carry the phosphoserine modification. A disordered region spans residues 598 to 624 (LNKSSEDDGASERLLPSEGTSSDPVTL). A VCP/p97-interacting motif (VIM) region spans residues 622-640 (VTLRRRMLAAAAERRLQRQ).

Interacts with RNF5. Also forms an ERAD complex containing VCP/p97, NGLY1; PSMC1; SAKS1 and RAD23B required for coupling retrotranslocation, ubiquitination and deglycosylation. Interacts with DERL1. Interacts (through a region distinct from the RING finger) with UBE2G2/UBC7. Component of the VCP/p97-AMFR/gp78 complex that enhances VCP/p97 binding to polyubiquitinated proteins for their degradation by the endoplasmic reticulum-associated degradation (ERAD) pathway. Interacts (via the VIM) with VCP/p97. Interacts (via its membrane domain) with INSIG1; the interaction initiates the sterol-mediated ubiquitination and degradation of HMGCR by the ERAD pathway. Interacts with AUP1, UBE2G2 and RNF139/TRC8; interaction with AUP1 facilitates interaction of AMFR with ubiquitin-conjugating enzyme UBE2G2 and ubiquitin ligase RNF139, leading to sterol-induced ubiquitination of HNGCR and its subsequent proteasomal degradation. Interacts with BAG6. Interacts with USP13 (via UBA 2 domain); the interaction is direct. Interacts with LMBR1L, UBAC2 and CTNNB1. Interacts with C18orf32. In terms of processing, palmitoylation of the RING-type zing finger by ZDHHC6 promotes localization to the peripheral endoplasmic reticulum. Expressed in heart, brain, liver, lung, skeletal muscle, kidney and testis. Not detected in spleen.

Its subcellular location is the endoplasmic reticulum membrane. It catalyses the reaction [E2 ubiquitin-conjugating enzyme]-S-ubiquitinyl-L-cysteine + [acceptor protein]-L-cysteine = [E2 ubiquitin-conjugating enzyme]-L-cysteine + [acceptor protein]-S-ubiquitinyl-L-cysteine.. It participates in protein modification; protein ubiquitination. E3 ubiquitin-protein ligase that mediates the polyubiquitination of lysine and cysteine residues on target proteins, such as CD3D, CYP3A4, CFTR, INSIG1, SOAT2/ACAT2 and APOB for proteasomal degradation. Component of a VCP/p97-AMFR/gp78 complex that participates in the final step of endoplasmic reticulum-associated degradation (ERAD). The VCP/p97-AMFR/gp78 complex is involved in the sterol-accelerated ERAD degradation of HMGCR through binding to the HMGCR-INSIG1 complex at the ER membrane. In addition, interaction of AMFR with AUP1 facilitates interaction of AMFR with ubiquitin-conjugating enzyme UBE2G2 and ubiquitin ligase RNF139, leading to sterol-induced HMGCR ubiquitination. The ubiquitinated HMGCR is then released from the ER by the complex into the cytosol for subsequent destruction. In addition to ubiquitination on lysine residues, catalyzes ubiquitination on cysteine residues: together with INSIG1, mediates polyubiquitination of SOAT2/ACAT2 at 'Cys-277', leading to its degradation when the lipid levels are low. Catalyzes ubiquitination and subsequent degradation of INSIG1 when cells are depleted of sterols. Mediates polyubiquitination of INSIG2 at 'Cys-215' in some tissues, leading to its degradation. Also regulates ERAD through the ubiquitination of UBL4A a component of the BAG6/BAT3 complex. Also acts as a scaffold protein to assemble a complex that couples ubiquitination, retranslocation and deglycosylation. Mediates tumor invasion and metastasis as a receptor for the GPI/autocrine motility factor. In association with LMBR1L and UBAC2, negatively regulates the canonical Wnt signaling pathway in the lymphocytes by promoting the ubiquitin-mediated degradation of CTNNB1 and Wnt receptors FZD6 and LRP6. Regulates NF-kappa-B and MAPK signaling pathways by mediating 'Lys-27'-linked polyubiquitination of TAB3 and promoting subsequent TAK1/MAP3K7 activation. The polypeptide is E3 ubiquitin-protein ligase AMFR (Amfr) (Mus musculus (Mouse)).